A 405-amino-acid chain; its full sequence is Deoxyguanosinetriphosphate triphosphohydrolase-like protein (405 aa).

The HD domain occupies 75 to 219 (RLTHTIEVAQ…AAIADDIAYN (145 aa)).

Belongs to the dGTPase family. Type 2 subfamily.

The chain is Deoxyguanosinetriphosphate triphosphohydrolase-like protein from Rhizobium johnstonii (strain DSM 114642 / LMG 32736 / 3841) (Rhizobium leguminosarum bv. viciae).